A 288-amino-acid polypeptide reads, in one-letter code: Cell division protein ZipA (288 aa).

A topological domain (periplasmic) is located at residue M1. Residues 2 to 22 (EIGLREWLIVIGIIVIAGILF) traverse the membrane as a helical segment. The Cytoplasmic segment spans residues 23-288 (DGWRRMRGGK…FERRALTQKR (266 aa)). Composition is skewed to basic and acidic residues over residues 66–75 (KEPQLDEHDL) and 83–93 (REAREPRESGS). The disordered stretch occupies residues 66–141 (KEPQLDEHDL…AKSSPAVADK (76 aa)). Low complexity predominate over residues 106–117 (GDLNLDLDLDGG).

Belongs to the ZipA family. In terms of assembly, interacts with FtsZ via their C-terminal domains.

Its subcellular location is the cell inner membrane. Essential cell division protein that stabilizes the FtsZ protofilaments by cross-linking them and that serves as a cytoplasmic membrane anchor for the Z ring. Also required for the recruitment to the septal ring of downstream cell division proteins. The sequence is that of Cell division protein ZipA from Pseudomonas fluorescens (strain Pf0-1).